The chain runs to 407 residues: Peptidase T (407 aa).

Histidine 77 provides a ligand contact to Zn(2+). Residue aspartate 79 is part of the active site. Position 140 (aspartate 140) interacts with Zn(2+). Catalysis depends on glutamate 174, which acts as the Proton acceptor. Residues glutamate 175, aspartate 197, and histidine 379 each coordinate Zn(2+).

It belongs to the peptidase M20B family. Zn(2+) serves as cofactor.

The protein localises to the cytoplasm. The catalysed reaction is Release of the N-terminal residue from a tripeptide.. Cleaves the N-terminal amino acid of tripeptides. The protein is Peptidase T of Bacteroides fragilis (strain YCH46).